The sequence spans 277 residues: 3-methyl-2-oxobutanoate hydroxymethyltransferase (277 aa).

The Mg(2+) site is built by Asp43 and Asp82. 3-methyl-2-oxobutanoate is bound by residues 43-44 (DS), Asp82, and Lys112. Glu114 contributes to the Mg(2+) binding site. Residue Glu181 is the Proton acceptor of the active site.

It belongs to the PanB family. As to quaternary structure, homodecamer; pentamer of dimers. The cofactor is Mg(2+).

The protein localises to the cytoplasm. It carries out the reaction 3-methyl-2-oxobutanoate + (6R)-5,10-methylene-5,6,7,8-tetrahydrofolate + H2O = 2-dehydropantoate + (6S)-5,6,7,8-tetrahydrofolate. The protein operates within cofactor biosynthesis; (R)-pantothenate biosynthesis; (R)-pantoate from 3-methyl-2-oxobutanoate: step 1/2. Catalyzes the reversible reaction in which hydroxymethyl group from 5,10-methylenetetrahydrofolate is transferred onto alpha-ketoisovalerate to form ketopantoate. The sequence is that of 3-methyl-2-oxobutanoate hydroxymethyltransferase from Listeria monocytogenes serotype 4a (strain HCC23).